The chain runs to 522 residues: Cytochrome b mRNA maturase bI3 (522 aa).

The Mitochondrial matrix segment spans residues M1 to N31. The segment at M1–P163 is cytochrome b. The chain crosses the membrane as a helical span at residues V32–M52. Residues H53–N84 lie on the Mitochondrial intermembrane side of the membrane. Residues G85–S105 form a helical membrane-spanning segment. The Mitochondrial matrix portion of the chain corresponds to Y106–R110. The chain crosses the membrane as a helical span at residues V111–G131. At Y132–M154 the chain is on the mitochondrial intermembrane side. Residues P155–I175 form a helical membrane-spanning segment. The maturase stretch occupies residues L164–Q522. Over S176–Q522 the chain is Mitochondrial matrix.

In the N-terminal section; belongs to the cytochrome b family. It in the C-terminal section; belongs to the LAGLIDADG endonuclease family.

Its subcellular location is the mitochondrion inner membrane. In terms of biological role, mitochondrial mRNA maturase required for splicing of intron 3 of the cytochrome b (COB) gene, containing its own coding sequence. This chain is Cytochrome b mRNA maturase bI3 (bI3), found in Debaryomyces hansenii (strain ATCC 36239 / CBS 767 / BCRC 21394 / JCM 1990 / NBRC 0083 / IGC 2968) (Yeast).